Here is a 150-residue protein sequence, read N- to C-terminus: Deoxyuridine 5'-triphosphate nucleotidohydrolase (150 aa).

Residues 69–71 (RSG), N82, and 86–88 (LID) contribute to the substrate site.

Belongs to the dUTPase family. Mg(2+) serves as cofactor.

The catalysed reaction is dUTP + H2O = dUMP + diphosphate + H(+). The protein operates within pyrimidine metabolism; dUMP biosynthesis; dUMP from dCTP (dUTP route): step 2/2. Its function is as follows. This enzyme is involved in nucleotide metabolism: it produces dUMP, the immediate precursor of thymidine nucleotides and it decreases the intracellular concentration of dUTP so that uracil cannot be incorporated into DNA. This Chromobacterium violaceum (strain ATCC 12472 / DSM 30191 / JCM 1249 / CCUG 213 / NBRC 12614 / NCIMB 9131 / NCTC 9757 / MK) protein is Deoxyuridine 5'-triphosphate nucleotidohydrolase.